The sequence spans 121 residues: Small ribosomal subunit protein uS13 (121 aa).

The segment at 91 to 121 (HRRGLPVRGQNTKNNARTRKGKKASMAGKKK) is disordered. Residues 106–121 (ARTRKGKKASMAGKKK) show a composition bias toward basic residues.

Belongs to the universal ribosomal protein uS13 family. Part of the 30S ribosomal subunit. Forms a loose heterodimer with protein S19. Forms two bridges to the 50S subunit in the 70S ribosome.

In terms of biological role, located at the top of the head of the 30S subunit, it contacts several helices of the 16S rRNA. In the 70S ribosome it contacts the 23S rRNA (bridge B1a) and protein L5 of the 50S subunit (bridge B1b), connecting the 2 subunits; these bridges are implicated in subunit movement. Contacts the tRNAs in the A and P-sites. This chain is Small ribosomal subunit protein uS13, found in Lacticaseibacillus paracasei (strain ATCC 334 / BCRC 17002 / CCUG 31169 / CIP 107868 / KCTC 3260 / NRRL B-441) (Lactobacillus paracasei).